Consider the following 113-residue polypeptide: Non-specific lipid-transfer protein (113 aa).

The first 24 residues, Ala-1–Ile-24, serve as a signal peptide directing secretion. 4 cysteine pairs are disulfide-bonded: Cys-26–Cys-73, Cys-36–Cys-50, Cys-51–Cys-96, and Cys-71–Cys-110. Asp-30 carries the Cis-14-hydroxy-10,13-dioxo-7-heptadecenoic acid aspartate ester lipid modification.

The protein belongs to the plant LTP family.

In terms of biological role, plant non-specific lipid-transfer proteins transfer phospholipids as well as galactolipids across membranes. May play a role in wax or cutin deposition in the cell walls of expanding epidermal cells and certain secretory tissues. The protein is Non-specific lipid-transfer protein of Triticum aestivum (Wheat).